The sequence spans 328 residues: MSKKPVRVAVTGAAGQIGYALLFRIASGEMLGKDQPVILQLLEIPDEKAQNALKGVIMELEDCAFPLLAGIEAHSDPLQAFKDTDYALLVGARPRGPGMERADLLAANAQIFTAQGKALNAVASRNVKVLVVGNPANTNAYIAMKSAPDLPAKNFTAMLRLDHNRAASQLAAKAGFKVGDIRKLTVWGNHSPTMYADYRFATVNGESVKAKINDQAWNKDVFLPTVGKRGAAIIAARGLSSAASAANAAIDHMRDWALGSGGEWVTMGVPSNGEYGIPAGIVFGFPVTTENGEYKIVEGLEIDAFSQECIDKTLAELQGEQDGVKHLL.

12–18 serves as a coordination point for NAD(+); the sequence is GAAGQIG. 2 residues coordinate substrate: arginine 95 and arginine 101. NAD(+) contacts are provided by residues asparagine 108, glutamine 115, and 132–134; that span reads VGN. Positions 134 and 165 each coordinate substrate. Residue histidine 190 is the Proton acceptor of the active site.

It belongs to the LDH/MDH superfamily. MDH type 2 family.

It carries out the reaction (S)-malate + NAD(+) = oxaloacetate + NADH + H(+). In terms of biological role, catalyzes the reversible oxidation of malate to oxaloacetate. The sequence is that of Malate dehydrogenase from Delftia acidovorans (strain DSM 14801 / SPH-1).